We begin with the raw amino-acid sequence, 337 residues long: Glyceraldehyde-3-phosphate dehydrogenase 3, cytosolic (337 aa).

Residues 13 to 14 (RI), Asp-35, and Arg-82 contribute to the NAD(+) site. D-glyceraldehyde 3-phosphate is bound by residues 153-155 (SCT), Thr-184, 213-214 (TG), and Arg-236. The active-site Nucleophile is Cys-154. Asn-318 lines the NAD(+) pocket.

The protein belongs to the glyceraldehyde-3-phosphate dehydrogenase family. Homotetramer.

The protein localises to the cytoplasm. The catalysed reaction is D-glyceraldehyde 3-phosphate + phosphate + NAD(+) = (2R)-3-phospho-glyceroyl phosphate + NADH + H(+). The protein operates within carbohydrate degradation; glycolysis; pyruvate from D-glyceraldehyde 3-phosphate: step 1/5. Functionally, key enzyme in glycolysis that catalyzes the first step of the pathway by converting D-glyceraldehyde 3-phosphate (G3P) into 3-phospho-D-glyceroyl phosphate. Essential for the maintenance of cellular ATP levels and carbohydrate metabolism. The protein is Glyceraldehyde-3-phosphate dehydrogenase 3, cytosolic (GAPC3) of Oryza sativa subsp. japonica (Rice).